Consider the following 444-residue polypeptide: Methionine aminopeptidase 2-1 (444 aa).

The tract at residues 1 to 92 (MAAQVTEKLQ…VPVSNLFPNN (92 aa)) is disordered. Polar residues predominate over residues 15–29 (NGQNGDAKANSTAVG). Over residues 34–45 (GEAEDDSDDEKE) the composition is skewed to acidic residues. A compositionally biased stretch (basic residues) spans 59–73 (AKKKKRKSKKKKKGG). Residue histidine 197 coordinates substrate. 3 residues coordinate a divalent metal cation: aspartate 217, aspartate 228, and histidine 297. Histidine 305 provides a ligand contact to substrate. Glutamate 330 and glutamate 425 together coordinate a divalent metal cation.

It belongs to the peptidase M24A family. Methionine aminopeptidase eukaryotic type 2 subfamily. The cofactor is Co(2+). Requires Zn(2+) as cofactor. Mn(2+) is required as a cofactor. Fe(2+) serves as cofactor.

It is found in the cytoplasm. The enzyme catalyses Release of N-terminal amino acids, preferentially methionine, from peptides and arylamides.. Cotranslationally removes the N-terminal methionine from nascent proteins. The N-terminal methionine is often cleaved when the second residue in the primary sequence is small and uncharged (Met-Ala-, Cys, Gly, Pro, Ser, Thr, or Val). This Neosartorya fischeri (strain ATCC 1020 / DSM 3700 / CBS 544.65 / FGSC A1164 / JCM 1740 / NRRL 181 / WB 181) (Aspergillus fischerianus) protein is Methionine aminopeptidase 2-1.